The chain runs to 295 residues: MAITAQMVKELREKTGAGMMDCKKALTETNGDMEKAIDFLREKGIAKAAKKADRIAAEGLTFIETNGNDALILELNSETDFVAKNEGFQALIKELAAHLLANKPANVEEAMTQTIEGGKTVEEHINEAIAKIGEKLTLRRFEIVSKTDADAFGAYLHMGGRIGVLTVLEGSTDEAAAKDVAMHIAAVNPKYIDRDAVTAEEVEHERQVLTQQALNEGKPEKIVAKMVEGRLGKFFEEICLLDQAFVKNPDMKVRQFVESKGGTLKGFVRYAVGEGIEKREDNFAEEVMNQVKGSN.

The interval 79–82 is involved in Mg(2+) ion dislocation from EF-Tu; it reads TDFV.

The protein belongs to the EF-Ts family.

The protein localises to the cytoplasm. Functionally, associates with the EF-Tu.GDP complex and induces the exchange of GDP to GTP. It remains bound to the aminoacyl-tRNA.EF-Tu.GTP complex up to the GTP hydrolysis stage on the ribosome. This Bacillus cereus (strain G9842) protein is Elongation factor Ts.